The primary structure comprises 82 residues: Mu-conotoxin GVIIJ (82 aa).

Residues 1 to 22 (MKLTCVVIVAALLLTACQLITA) form the signal peptide. Positions 23–47 (LDCGGTQKHRALRSTIKLSLLRQHR) are excised as a propeptide. Residue Trp49 is modified to 6'-bromotryptophan. 3 disulfide bridges follow: Cys50–Cys65, Cys57–Cys69, and Cys64–Cys76. Pro53 bears the 4-hydroxyproline mark. Cys71 serves as a coordination point for a protein.

This sequence belongs to the conotoxin O1 superfamily. Post-translationally, cys-71 is a key residue that tethers to the channel by covalent attachment, leading to nearly irreversible inhibition (k(off) very low). In order to determine the solution structure without dimerization, this residue was mutated to Cys. As to expression, expressed by the venom duct.

Its subcellular location is the secreted. In terms of biological role, mu-conotoxins block voltage-gated sodium channels (Nav). This toxin (GVIIJ(SSG)) blocks Nav1.1/SCN1A (Kd=11 nM), Nav1.2/SCN2A (Kd=11 nM), Nav1.3/SCN3A (Kd=15 nM), Nav1.4/SCN4A (Kd=4.7 nM), Nav1.6/SCN8A (Kd=360 nM) and Nav1.7/SCN9A (Kd=41 nM). It binds the channel at the newly described site 8, which is composed by two surfaces whose one contains a non-disulfide-bonded cysteine (which is free to covalently bind the toxin Cys-71). It is noteworthy that coexpression of subunits beta-2 or beta-4 (but not beta-1 or beta-3) protects rNav1.1-1.7 against block by the toxin, since these subunits (thanks to their extracellular domain) covalently bind to the key cysteine of the channel, thus preventing the covalent binding of the toxin. The chain is Mu-conotoxin GVIIJ from Conus geographus (Geography cone).